Reading from the N-terminus, the 502-residue chain is MAQVLSTPLAIPGPTPIQFMAGLLARIVTKNTNKETSTPESPRSPRTPQGSILMDKYEIGKLLGHGSFAKVYLARNIHSGEDVAIKVIDKEKIVKSGLAGHIKREISILRRVRHPYIVHLLEVMATKTKIYIVMEYVRGGELYNTVARGRLREGTARRYFQQLISSVAFCHSRGVYHRDLKLENLLLDDKGNVKVSDFGLSVVSEQLKQEGICQTFCGTPAYLAPEVLTRKGYEGAKADIWSCGVILFVLMAGYLPFDDKNILVMYTKIYKGQFKCPKWFSPELARLVTRMLDTNPDTRITIPEIMKHRWFKKGFKHVKFYIENDKLCREDDDNDDDDSSSLSSGRSSTASEGDAEFDIKRVDSMPRPASLNAFDILSFSDLSGLFEEGGQGARFVSAAPMTKIISKLEEIAKEVKFMVRKKDWSVRLEGCREGAKGPLTIRVEIFELTPSLVVVEVKKKGGNIEEYEEFCNKELRPQLEKLMHYQADEVEEVMCLPPEIEQ.

The segment at 32–51 (TNKETSTPESPRSPRTPQGS) is disordered. Low complexity predominate over residues 35–48 (ETSTPESPRSPRTP). In terms of domain architecture, Protein kinase spans 57–311 (YEIGKLLGHG…IPEIMKHRWF (255 aa)). Residues 63-71 (LGHGSFAKV) and Lys-86 each bind ATP. Residue Asp-179 is the Proton acceptor of the active site. The tract at residues 197 to 226 (DFGLSVVSEQLKQEGICQTFCGTPAYLAPE) is activation loop. Position 201 is a phosphoserine (Ser-201). Phosphothreonine is present on Thr-215. A disordered region spans residues 331–359 (DDDNDDDDSSSLSSGRSSTASEGDAEFDI). Positions 340 to 352 (SSLSSGRSSTASE) are enriched in low complexity. Residues 366 to 387 (PRPASLNAFDILSFSDLSGLFE) enclose the NAF domain. The tract at residues 390–419 (GQGARFVSAAPMTKIISKLEEIAKEVKFMV) is PPI.

This sequence belongs to the protein kinase superfamily. CAMK Ser/Thr protein kinase family. SNF1 subfamily. Interacts with CBL2 and CBL3. The cofactor is Mn(2+).

It carries out the reaction L-seryl-[protein] + ATP = O-phospho-L-seryl-[protein] + ADP + H(+). The catalysed reaction is L-threonyl-[protein] + ATP = O-phospho-L-threonyl-[protein] + ADP + H(+). In terms of biological role, CIPK serine-threonine protein kinases interact with CBL proteins. Binding of a CBL protein to the regulatory NAF domain of CIPK protein lead to the activation of the kinase in a calcium-dependent manner. The sequence is that of CBL-interacting serine/threonine-protein kinase 13 (CIPK13) from Arabidopsis thaliana (Mouse-ear cress).